The sequence spans 128 residues: L-ectoine synthase (128 aa).

It belongs to the ectoine synthase family.

It catalyses the reaction (2S)-4-acetamido-2-aminobutanoate = L-ectoine + H2O. The protein operates within amine and polyamine biosynthesis; ectoine biosynthesis; L-ectoine from L-aspartate 4-semialdehyde: step 3/3. Its function is as follows. Catalyzes the circularization of gamma-N-acetyl-alpha,gamma-diaminobutyric acid (ADABA) to ectoine (1,4,5,6-tetrahydro-2-methyl-4-pyrimidine carboxylic acid), which is an excellent osmoprotectant. The protein is L-ectoine synthase of Virgibacillus pantothenticus.